We begin with the raw amino-acid sequence, 96 residues long: Small ribosomal subunit protein bS16 (96 aa).

The protein belongs to the bacterial ribosomal protein bS16 family.

This chain is Small ribosomal subunit protein bS16, found in Anaplasma phagocytophilum (strain HZ).